We begin with the raw amino-acid sequence, 378 residues long: Palmitoyltransferase PFA4 (378 aa).

The Cytoplasmic segment spans residues 1-9; it reads MPVKLRWPW. A helical membrane pass occupies residues 10–30; it reads LGIAIPTFLISFIGYGAHYFI. Topologically, residues 31-40 are lumenal; it reads LSNFLSVPKQ. Residues 41–61 traverse the membrane as a helical segment; the sequence is ITFEFCLSMIWLSYYLAICTN. Over 62–119 the chain is Cytoplasmic; it reads PGRPLPNYKPPPDIWRNFCKKCQSYKPERSHHCKTCNQCVLMMDHHCPWTMNCVGFAN. Positions 78-128 constitute a DHHC domain; it reads NFCKKCQSYKPERSHHCKTCNQCVLMMDHHCPWTMNCVGFANYPHFLRFLF. C108 (S-palmitoyl cysteine intermediate) is an active-site residue. The helical transmembrane segment at 120 to 140 threads the bilayer; it reads YPHFLRFLFWIIVTTSVLFCI. Residues 141 to 164 are Lumenal-facing; the sequence is QAKRIYFIWQQRHLPGYFFKKSEL. A helical transmembrane segment spans residues 165-185; the sequence is IFLTISSPLNSFVLLTITILF. Over 186–378 the chain is Cytoplasmic; it reads LRCLFNQILN…DDFGVDVDME (193 aa).

The protein belongs to the DHHC palmitoyltransferase family. PFA4 subfamily. In terms of processing, autopalmitoylated.

The protein localises to the endoplasmic reticulum membrane. It carries out the reaction L-cysteinyl-[protein] + hexadecanoyl-CoA = S-hexadecanoyl-L-cysteinyl-[protein] + CoA. Its function is as follows. Mediates the reversible addition of palmitate to target proteins, thereby regulating their membrane association and biological function. Palmitoylates several amino acid permeases. Palmitoylates chitin synthase CHS3, which is required for its proper export from the ER. Can palmitoylate RAS2 in vitro. In Saccharomyces cerevisiae (strain ATCC 204508 / S288c) (Baker's yeast), this protein is Palmitoyltransferase PFA4.